A 374-amino-acid chain; its full sequence is Translocating chain-associated membrane protein 1 (374 aa).

Residues Met-1–Cys-29 are Cytoplasmic-facing. Residues Leu-30 to Phe-50 traverse the membrane as a helical segment. Topologically, residues Val-51–Gly-76 are lumenal. Asn-56 carries an N-linked (GlcNAc...) asparagine glycan. Residues Ile-77 to Ile-97 traverse the membrane as a helical segment. Residues Gln-98–Glu-121 are Cytoplasmic-facing. The 210-residue stretch at Ser-117–His-326 folds into the TLC domain. Residues Ser-122–Ser-142 traverse the membrane as a helical segment. The Lumenal segment spans residues Glu-143–Asn-159. A helical transmembrane segment spans residues Leu-160–Phe-180. Residues Pro-181–Asp-192 lie on the Cytoplasmic side of the membrane. Residues Ile-193 to Leu-213 traverse the membrane as a helical segment. Over Asn-214–His-217 the chain is Lumenal. Residues Leu-218–Leu-238 form a helical membrane-spanning segment. Over Phe-239–Ser-251 the chain is Cytoplasmic. A helical membrane pass occupies residues Leu-252–Val-272. Residues Gly-273 to Arg-297 lie on the Lumenal side of the membrane. A helical transmembrane segment spans residues Ile-298–Phe-318. Over Gln-319–Ser-374 the chain is Cytoplasmic. The segment at Pro-333–Ser-374 is disordered. Over residues Val-334–Arg-347 the composition is skewed to basic residues. Over residues Asn-352–Ala-363 the composition is skewed to polar residues. Residue Ser-365 is modified to Phosphoserine.

Belongs to the TRAM family. As to quaternary structure, interacts with SEC61B. May interact with Derlin-1/DERL1. N-glycosylated.

The protein localises to the endoplasmic reticulum membrane. Involved in the translocation of nascent protein chains into or through the endoplasmic reticulum (ER) membrane by facilitating the proper chain positioning at the SEC61 channel. Regulates the exposure of nascent secretory protein chain to the cytosol during translocation into the ER. May affect the phospholipid bilayer in the vicinity of the lateral gate of the SEC61 channel, thereby facilitating ER protein transport. Intimately associates with transmembrane (TM) domain of nascent membrane proteins during the entire integration process into the ER membrane. Associates with the second TM domain of G-protein-coupled receptor opsin/OPSD nascent chain in the ER membrane, which may facilitate its integration into the membrane. Under conditions of ER stress, participates in the disposal of misfolded ER membrane proteins during the unfolded protein response (UPR), an integrated stress response (ISR) pathway, by selectively retrotranslocating misfolded ER-membrane proteins from the ER into the cytosol where they are ubiquitinated and degraded by the proteasome. The sequence is that of Translocating chain-associated membrane protein 1 from Mus musculus (Mouse).